Consider the following 338-residue polypeptide: Ketol-acid reductoisomerase (NADP(+)) (338 aa).

In terms of domain architecture, KARI N-terminal Rossmann spans 1-181 (MQVYYDKDAD…GGGRAGVIET (181 aa)). NADP(+) contacts are provided by residues 24–27 (YGSQ), Arg47, Ser50, Ser52, and 82–85 (DEHQ). His107 is an active-site residue. Gly133 provides a ligand contact to NADP(+). The KARI C-terminal knotted domain occupies 182–327 (SFREETETDL…ERLRGMMPWI (146 aa)). 4 residues coordinate Mg(2+): Asp190, Glu194, Glu226, and Glu230. Ser251 is a substrate binding site.

This sequence belongs to the ketol-acid reductoisomerase family. The cofactor is Mg(2+).

The catalysed reaction is (2R)-2,3-dihydroxy-3-methylbutanoate + NADP(+) = (2S)-2-acetolactate + NADPH + H(+). It catalyses the reaction (2R,3R)-2,3-dihydroxy-3-methylpentanoate + NADP(+) = (S)-2-ethyl-2-hydroxy-3-oxobutanoate + NADPH + H(+). It participates in amino-acid biosynthesis; L-isoleucine biosynthesis; L-isoleucine from 2-oxobutanoate: step 2/4. Its pathway is amino-acid biosynthesis; L-valine biosynthesis; L-valine from pyruvate: step 2/4. Involved in the biosynthesis of branched-chain amino acids (BCAA). Catalyzes an alkyl-migration followed by a ketol-acid reduction of (S)-2-acetolactate (S2AL) to yield (R)-2,3-dihydroxy-isovalerate. In the isomerase reaction, S2AL is rearranged via a Mg-dependent methyl migration to produce 3-hydroxy-3-methyl-2-ketobutyrate (HMKB). In the reductase reaction, this 2-ketoacid undergoes a metal-dependent reduction by NADPH to yield (R)-2,3-dihydroxy-isovalerate. The protein is Ketol-acid reductoisomerase (NADP(+)) of Alkalilimnicola ehrlichii (strain ATCC BAA-1101 / DSM 17681 / MLHE-1).